The chain runs to 613 residues: Proline--tRNA ligase (613 aa).

This sequence belongs to the class-II aminoacyl-tRNA synthetase family. ProS type 1 subfamily. In terms of assembly, homodimer.

Its subcellular location is the cytoplasm. It catalyses the reaction tRNA(Pro) + L-proline + ATP = L-prolyl-tRNA(Pro) + AMP + diphosphate. In terms of biological role, catalyzes the attachment of proline to tRNA(Pro) in a two-step reaction: proline is first activated by ATP to form Pro-AMP and then transferred to the acceptor end of tRNA(Pro). As ProRS can inadvertently accommodate and process non-cognate amino acids such as alanine and cysteine, to avoid such errors it has two additional distinct editing activities against alanine. One activity is designated as 'pretransfer' editing and involves the tRNA(Pro)-independent hydrolysis of activated Ala-AMP. The other activity is designated 'posttransfer' editing and involves deacylation of mischarged Ala-tRNA(Pro). The misacylated Cys-tRNA(Pro) is not edited by ProRS. The sequence is that of Proline--tRNA ligase from Tropheryma whipplei (strain Twist) (Whipple's bacillus).